The following is a 203-amino-acid chain: Recombination protein RecR (203 aa).

The C4-type zinc-finger motif lies at 56 to 71; that stretch reads CEVCGNVSDADRCRIC. One can recognise a Toprim domain in the interval 79-179; the sequence is SLVCVVEEPK…TVTRIASGLP (101 aa).

Belongs to the RecR family.

May play a role in DNA repair. It seems to be involved in an RecBC-independent recombinational process of DNA repair. It may act with RecF and RecO. This chain is Recombination protein RecR, found in Mycobacterium sp. (strain JLS).